The primary structure comprises 435 residues: Manganese transport system membrane protein MntC (435 aa).

Transmembrane regions (helical) follow at residues 17–37 (VLAG…FVLL), 42–62 (LIGD…FLFT), 68–88 (PFFL…IQLI), 98–118 (SAIG…LTYI), 143–163 (QDII…IVFF), 166–186 (FTLI…VRFL), 189–209 (LLAC…GVIL), 228–248 (LTGM…AGTL), and 255–275 (GMAT…FSMI).

The protein belongs to the ABC-3 integral membrane protein family. The complex is probably composed of two ATP-binding proteins (MntB), two transmembrane proteins (MntC and MntD) and a solute-binding protein (MntA).

The protein localises to the cell membrane. In terms of biological role, probably part of the ABC transporter complex MntABCD involved in manganese import. Probably responsible for the translocation of the substrate across the membrane. This Bacillus subtilis (strain 168) protein is Manganese transport system membrane protein MntC.